Reading from the N-terminus, the 403-residue chain is Acetylornithine aminotransferase (403 aa).

Pyridoxal 5'-phosphate is bound by residues 107-108 and Phe-140; that span reads GA. Arg-143 provides a ligand contact to N(2)-acetyl-L-ornithine. 225-228 lines the pyridoxal 5'-phosphate pocket; sequence DEVQ. Lys-254 is modified (N6-(pyridoxal phosphate)lysine). Ser-282 serves as a coordination point for N(2)-acetyl-L-ornithine. Thr-283 is a binding site for pyridoxal 5'-phosphate.

This sequence belongs to the class-III pyridoxal-phosphate-dependent aminotransferase family. ArgD subfamily. As to quaternary structure, homodimer. The cofactor is pyridoxal 5'-phosphate.

Its subcellular location is the cytoplasm. The catalysed reaction is N(2)-acetyl-L-ornithine + 2-oxoglutarate = N-acetyl-L-glutamate 5-semialdehyde + L-glutamate. It functions in the pathway amino-acid biosynthesis; L-arginine biosynthesis; N(2)-acetyl-L-ornithine from L-glutamate: step 4/4. The sequence is that of Acetylornithine aminotransferase from Vibrio parahaemolyticus serotype O3:K6 (strain RIMD 2210633).